Here is a 310-residue protein sequence, read N- to C-terminus: Porphobilinogen deaminase (310 aa).

Residue C242 is modified to S-(dipyrrolylmethanemethyl)cysteine.

This sequence belongs to the HMBS family. In terms of assembly, monomer. Dipyrromethane is required as a cofactor.

It catalyses the reaction 4 porphobilinogen + H2O = hydroxymethylbilane + 4 NH4(+). It functions in the pathway porphyrin-containing compound metabolism; protoporphyrin-IX biosynthesis; coproporphyrinogen-III from 5-aminolevulinate: step 2/4. Tetrapolymerization of the monopyrrole PBG into the hydroxymethylbilane pre-uroporphyrinogen in several discrete steps. This is Porphobilinogen deaminase from Shewanella baltica (strain OS223).